The primary structure comprises 856 residues: Valine--tRNA ligase (856 aa).

The short motif at 47–57 (PTASGVLHIGH) is the 'HIGH' region element. A 'KMSKS' region motif is present at residues 578–582 (KMSKS). Lysine 581 lines the ATP pocket.

This sequence belongs to the class-I aminoacyl-tRNA synthetase family. ValS type 2 subfamily. In terms of assembly, monomer.

It is found in the cytoplasm. It catalyses the reaction tRNA(Val) + L-valine + ATP = L-valyl-tRNA(Val) + AMP + diphosphate. Functionally, catalyzes the attachment of valine to tRNA(Val). As ValRS can inadvertently accommodate and process structurally similar amino acids such as threonine, to avoid such errors, it has a 'posttransfer' editing activity that hydrolyzes mischarged Thr-tRNA(Val) in a tRNA-dependent manner. The sequence is that of Valine--tRNA ligase from Tropheryma whipplei (strain TW08/27) (Whipple's bacillus).